We begin with the raw amino-acid sequence, 218 residues long: GTP cyclohydrolase 1 (218 aa).

Zn(2+) contacts are provided by Cys109, His112, and Cys180.

Belongs to the GTP cyclohydrolase I family. Toroid-shaped homodecamer, composed of two pentamers of five dimers.

The catalysed reaction is GTP + H2O = 7,8-dihydroneopterin 3'-triphosphate + formate + H(+). It functions in the pathway cofactor biosynthesis; 7,8-dihydroneopterin triphosphate biosynthesis; 7,8-dihydroneopterin triphosphate from GTP: step 1/1. This chain is GTP cyclohydrolase 1, found in Haemophilus ducreyi (strain 35000HP / ATCC 700724).